Reading from the N-terminus, the 456-residue chain is Nitrogenase molybdenum-iron protein beta chain (456 aa).

[8Fe-7S] cluster-binding residues include C23, C48, C106, and S141.

Belongs to the NifD/NifK/NifE/NifN family. As to quaternary structure, tetramer of two alpha and two beta chains. Forms complex with the iron protein (nitrogenase component 2). It depends on [8Fe-7S] cluster as a cofactor.

It catalyses the reaction N2 + 8 reduced [2Fe-2S]-[ferredoxin] + 16 ATP + 16 H2O = H2 + 8 oxidized [2Fe-2S]-[ferredoxin] + 2 NH4(+) + 16 ADP + 16 phosphate + 6 H(+). In terms of biological role, this molybdenum-iron protein is part of the nitrogenase complex that catalyzes the key enzymatic reactions in nitrogen fixation. In Methanosarcina barkeri, this protein is Nitrogenase molybdenum-iron protein beta chain (nifK2).